The primary structure comprises 521 residues: 2-isopropylmalate synthase (521 aa).

The Pyruvate carboxyltransferase domain maps to 12–274 (VIIFDTTLRD…WNKIDTTMLT (263 aa)). Positions 21, 209, 211, and 245 each coordinate Mn(2+). The interval 398–521 (KLVSLTVIAG…DMAAPAAAAS (124 aa)) is regulatory domain.

The protein belongs to the alpha-IPM synthase/homocitrate synthase family. LeuA type 1 subfamily. In terms of assembly, homodimer. Mn(2+) serves as cofactor.

It localises to the cytoplasm. It catalyses the reaction 3-methyl-2-oxobutanoate + acetyl-CoA + H2O = (2S)-2-isopropylmalate + CoA + H(+). It participates in amino-acid biosynthesis; L-leucine biosynthesis; L-leucine from 3-methyl-2-oxobutanoate: step 1/4. In terms of biological role, catalyzes the condensation of the acetyl group of acetyl-CoA with 3-methyl-2-oxobutanoate (2-ketoisovalerate) to form 3-carboxy-3-hydroxy-4-methylpentanoate (2-isopropylmalate). The sequence is that of 2-isopropylmalate synthase from Rhodopseudomonas palustris (strain BisA53).